Reading from the N-terminus, the 201-residue chain is Small ribosomal subunit protein uS4 (201 aa).

A disordered region spans residues 28–47; the sequence is KKNYPPGQHGNSRKRKTSEY. The region spanning 92-155 is the S4 RNA-binding domain; the sequence is GRLDNIVFRL…KSLEVIANSL (64 aa).

Belongs to the universal ribosomal protein uS4 family. As to quaternary structure, part of the 30S ribosomal subunit. Contacts protein S5. The interaction surface between S4 and S5 is involved in control of translational fidelity.

In terms of biological role, one of the primary rRNA binding proteins, it binds directly to 16S rRNA where it nucleates assembly of the body of the 30S subunit. Its function is as follows. With S5 and S12 plays an important role in translational accuracy. This Bacteroides fragilis (strain YCH46) protein is Small ribosomal subunit protein uS4.